An 83-amino-acid chain; its full sequence is NAD(P)H-quinone oxidoreductase subunit L (83 aa).

Helical transmembrane passes span 18 to 38 (ILAYALLGGLYLLVVPLALFF) and 53 to 73 (LLVYGLVFLFFPGMVVFAPFL).

It belongs to the complex I NdhL subunit family. In terms of assembly, NDH-1 can be composed of about 15 different subunits; different subcomplexes with different compositions have been identified which probably have different functions.

It localises to the cellular thylakoid membrane. It catalyses the reaction a plastoquinone + NADH + (n+1) H(+)(in) = a plastoquinol + NAD(+) + n H(+)(out). The catalysed reaction is a plastoquinone + NADPH + (n+1) H(+)(in) = a plastoquinol + NADP(+) + n H(+)(out). In terms of biological role, NDH-1 shuttles electrons from an unknown electron donor, via FMN and iron-sulfur (Fe-S) centers, to quinones in the respiratory and/or the photosynthetic chain. The immediate electron acceptor for the enzyme in this species is believed to be plastoquinone. Couples the redox reaction to proton translocation, and thus conserves the redox energy in a proton gradient. Cyanobacterial NDH-1 also plays a role in inorganic carbon-concentration. The chain is NAD(P)H-quinone oxidoreductase subunit L from Parasynechococcus marenigrum (strain WH8102).